Reading from the N-terminus, the 382-residue chain is Galactokinase (382 aa).

34-37 (EHTD) contributes to the substrate binding site. Residue 124–130 (GAGLSSS) participates in ATP binding. The Mg(2+) site is built by Ser-130 and Glu-162. Residue Asp-174 is the Proton acceptor of the active site. Tyr-223 contacts substrate.

Belongs to the GHMP kinase family. GalK subfamily.

It localises to the cytoplasm. The enzyme catalyses alpha-D-galactose + ATP = alpha-D-galactose 1-phosphate + ADP + H(+). The protein operates within carbohydrate metabolism; galactose metabolism. Its function is as follows. Catalyzes the transfer of the gamma-phosphate of ATP to D-galactose to form alpha-D-galactose-1-phosphate (Gal-1-P). This Escherichia coli O127:H6 (strain E2348/69 / EPEC) protein is Galactokinase.